Here is a 432-residue protein sequence, read N- to C-terminus: Transcriptional adapter 3-A (432 aa).

Disordered regions lie at residues 90-127 (HELG…RNMQ) and 275-314 (SPVE…TKSL). Positions 293 to 305 (DGASTSPRSQNKP) are enriched in polar residues. Residues 335 to 398 (ADDSEDEVLA…NEVMDAFRKI (64 aa)) are a coiled coil.

Belongs to the NGG1 family.

It localises to the nucleus. In terms of biological role, functions as a component of the PCAF complex. The PCAF complex is capable of efficiently acetylating histones in a nucleosomal context. The protein is Transcriptional adapter 3-A (tada3-a) of Xenopus laevis (African clawed frog).